The primary structure comprises 475 residues: Glutamate--tRNA ligase (475 aa).

The 'HIGH' region motif lies at 11–21 (PSPTGFLHIGG). The 'KMSKS' region motif lies at 240–244 (KLSKR). Residue Lys243 participates in ATP binding.

Belongs to the class-I aminoacyl-tRNA synthetase family. Glutamate--tRNA ligase type 1 subfamily. In terms of assembly, monomer.

Its subcellular location is the cytoplasm. It catalyses the reaction tRNA(Glu) + L-glutamate + ATP = L-glutamyl-tRNA(Glu) + AMP + diphosphate. Its function is as follows. Catalyzes the attachment of glutamate to tRNA(Glu) in a two-step reaction: glutamate is first activated by ATP to form Glu-AMP and then transferred to the acceptor end of tRNA(Glu). This is Glutamate--tRNA ligase from Bradyrhizobium diazoefficiens (strain JCM 10833 / BCRC 13528 / IAM 13628 / NBRC 14792 / USDA 110).